The chain runs to 282 residues: Large ribosomal subunit protein uL2 (282 aa).

The disordered stretch occupies residues 223-282 (TVRGSVMNPNDHPHGGGEGRAPIGRKSPVTPWGKKALGVKTRNTKKTSEKLIVRKRSNKK).

It belongs to the universal ribosomal protein uL2 family. Part of the 50S ribosomal subunit. Forms a bridge to the 30S subunit in the 70S ribosome.

In terms of biological role, one of the primary rRNA binding proteins. Required for association of the 30S and 50S subunits to form the 70S ribosome, for tRNA binding and peptide bond formation. It has been suggested to have peptidyltransferase activity; this is somewhat controversial. Makes several contacts with the 16S rRNA in the 70S ribosome. This is Large ribosomal subunit protein uL2 from Mycoplasma mycoides subsp. mycoides SC (strain CCUG 32753 / NCTC 10114 / PG1).